The chain runs to 309 residues: Branched-chain-amino-acid aminotransferase (309 aa).

Residue Lys160 is modified to N6-(pyridoxal phosphate)lysine.

Belongs to the class-IV pyridoxal-phosphate-dependent aminotransferase family. In terms of assembly, homohexamer. The cofactor is pyridoxal 5'-phosphate.

It carries out the reaction L-leucine + 2-oxoglutarate = 4-methyl-2-oxopentanoate + L-glutamate. The enzyme catalyses L-isoleucine + 2-oxoglutarate = (S)-3-methyl-2-oxopentanoate + L-glutamate. It catalyses the reaction L-valine + 2-oxoglutarate = 3-methyl-2-oxobutanoate + L-glutamate. It participates in amino-acid biosynthesis; L-isoleucine biosynthesis; L-isoleucine from 2-oxobutanoate: step 4/4. Its pathway is amino-acid biosynthesis; L-leucine biosynthesis; L-leucine from 3-methyl-2-oxobutanoate: step 4/4. It functions in the pathway amino-acid biosynthesis; L-valine biosynthesis; L-valine from pyruvate: step 4/4. Acts on leucine, isoleucine and valine. This chain is Branched-chain-amino-acid aminotransferase (ilvE), found in Salmonella typhi.